The primary structure comprises 131 residues: MDTSHTTKSCVLILLVALLCAERAQGLQCYECYGVPIETSCPAVTCRASDGFCIAQNIELIEDSQRRKLKTRQCLSFCPAGVPIRDPNIRERTSCCSEDLCNAAVPTAGSTWTMAGVLLFSLSSVVLQTLL.

The first 26 residues, 1-26 (MDTSHTTKSCVLILLVALLCAERAQG), serve as a signal peptide directing secretion. One can recognise a UPAR/Ly6 domain in the interval 27 to 115 (LQCYECYGVP…PTAGSTWTMA (89 aa)). Intrachain disulfides connect Cys29–Cys53, Cys32–Cys41, Cys46–Cys74, Cys78–Cys95, and Cys96–Cys101. Residue Gly109 is the site of GPI-anchor amidated glycine attachment. A propeptide spans 110-131 (STWTMAGVLLFSLSSVVLQTLL) (removed in mature form).

Its subcellular location is the cell membrane. This is Lymphocyte antigen 6C1 (Ly6c1) from Mus musculus (Mouse).